Here is a 1488-residue protein sequence, read N- to C-terminus: WD repeat-containing protein 7 (1488 aa).

7 WD repeats span residues 17-56, 62-104, 156-199, 324-366, 404-443, 462-507, and 558-597; these read APTH…EVNP, GHTA…CIEF, ISPD…SGLQ, VICP…DKQE, NEPL…IVQL, GHRN…MKHI, and RHLF…LDRC. 2 disordered regions span residues 761–781 and 911–947; these read EEED…PEYR and GDHM…QGQI. Over residues 768–781 the composition is skewed to basic and acidic residues; it reads VMRQRREESDPEYR. Phosphoserine is present on S935. Residues 937–947 are compositionally biased toward polar residues; sequence PASSNIVQGQI. 2 WD repeats span residues 1349–1388 and 1390–1430; these read PAIC…CQTI and GHKG…LGSI. Phosphoserine is present on S1454.

The polypeptide is WD repeat-containing protein 7 (Wdr7) (Rattus norvegicus (Rat)).